A 399-amino-acid polypeptide reads, in one-letter code: S-adenosylmethionine synthase (399 aa).

Residue 136–141 (GTGSAD) participates in ATP binding.

This sequence belongs to the AdoMet synthase 2 family. The cofactor is Mg(2+).

It catalyses the reaction L-methionine + ATP + H2O = S-adenosyl-L-methionine + phosphate + diphosphate. It functions in the pathway amino-acid biosynthesis; S-adenosyl-L-methionine biosynthesis; S-adenosyl-L-methionine from L-methionine: step 1/1. In terms of biological role, catalyzes the formation of S-adenosylmethionine from methionine and ATP. In Methanothrix thermoacetophila (strain DSM 6194 / JCM 14653 / NBRC 101360 / PT) (Methanosaeta thermophila), this protein is S-adenosylmethionine synthase.